We begin with the raw amino-acid sequence, 239 residues long: Small ribosomal subunit protein uS3 (239 aa).

The KH type-2 domain occupies 38–106; it reads IRELIEERFK…KTFVNVVEIK (69 aa).

The protein belongs to the universal ribosomal protein uS3 family. In terms of assembly, part of the 30S ribosomal subunit. Forms a tight complex with proteins S10 and S14.

Binds the lower part of the 30S subunit head. Binds mRNA in the 70S ribosome, positioning it for translation. In Elusimicrobium minutum (strain Pei191), this protein is Small ribosomal subunit protein uS3.